We begin with the raw amino-acid sequence, 70 residues long: U-scoloptoxin(04)-Er3a (70 aa).

An N-terminal signal peptide occupies residues 1 to 24; sequence MAAIRNLLILTMLLIVCVSWNADA.

It belongs to the scoloptoxin-04 family. In terms of processing, contains 2 disulfide bonds. Expressed by the venom gland.

It localises to the secreted. This chain is U-scoloptoxin(04)-Er3a, found in Ethmostigmus rubripes (Giant centipede).